The following is a 220-amino-acid chain: UPF0441 protein Spro_4274 (220 aa).

The disordered stretch occupies residues 181–220 (MAPKPAVTNTVTRGGFGESVAKQTSMQRSSATSSSRSMGG). Positions 203 to 220 (QTSMQRSSATSSSRSMGG) are enriched in low complexity.

This sequence belongs to the UPF0441 family.

This chain is UPF0441 protein Spro_4274, found in Serratia proteamaculans (strain 568).